The chain runs to 405 residues: Arginine biosynthesis bifunctional protein ArgJ (405 aa).

Substrate-binding residues include Thr152, Lys178, Thr189, Glu276, Asn400, and Thr405. Thr189 (nucleophile) is an active-site residue.

The protein belongs to the ArgJ family. Heterotetramer of two alpha and two beta chains.

The protein resides in the cytoplasm. It carries out the reaction N(2)-acetyl-L-ornithine + L-glutamate = N-acetyl-L-glutamate + L-ornithine. The enzyme catalyses L-glutamate + acetyl-CoA = N-acetyl-L-glutamate + CoA + H(+). It functions in the pathway amino-acid biosynthesis; L-arginine biosynthesis; L-ornithine and N-acetyl-L-glutamate from L-glutamate and N(2)-acetyl-L-ornithine (cyclic): step 1/1. The protein operates within amino-acid biosynthesis; L-arginine biosynthesis; N(2)-acetyl-L-ornithine from L-glutamate: step 1/4. Functionally, catalyzes two activities which are involved in the cyclic version of arginine biosynthesis: the synthesis of N-acetylglutamate from glutamate and acetyl-CoA as the acetyl donor, and of ornithine by transacetylation between N(2)-acetylornithine and glutamate. This is Arginine biosynthesis bifunctional protein ArgJ from Pseudomonas syringae pv. tomato (strain ATCC BAA-871 / DC3000).